We begin with the raw amino-acid sequence, 297 residues long: Streptogrisin-A (297 aa).

The N-terminal stretch at 1-38 (MTFKRFSPLSSTSRYARLLAVASGLVAAAALATPSAVA) is a signal peptide. Positions 39-115 (APEAESKATV…VKRAEGKFTP (77 aa)) are excised as a propeptide. A disulfide bond links cysteine 130 and cysteine 150. Catalysis depends on charge relay system residues histidine 149, aspartate 171, and serine 253. A disulfide bond links cysteine 247 and cysteine 274.

This sequence belongs to the peptidase S1 family. Monomer.

The catalysed reaction is Hydrolysis of proteins with specificity similar to chymotrypsin.. In terms of biological role, has a primary specificity for large aliphatic or aromatic amino acids. The polypeptide is Streptogrisin-A (sprA) (Streptomyces griseus).